The following is a 40-amino-acid chain: Dolichyl-diphosphooligosaccharide--protein glycosyltransferase subunit 4 (40 aa).

Residues 1-4 (MISD) lie on the Lumenal side of the membrane. A helical transmembrane segment spans residues 5 to 25 (VQLAIFSNVLGVFLFLLVVAY). The Cytoplasmic segment spans residues 26–40 (HYINANTGKPSAKAK).

Belongs to the OST4 family. Component of the oligosaccharyltransferase (OST) complex.

It is found in the endoplasmic reticulum membrane. Its function is as follows. Subunit of the oligosaccharyl transferase (OST) complex that catalyzes the initial transfer of a defined glycan (Glc(3)Man(9)GlcNAc(2) in eukaryotes) from the lipid carrier dolichol-pyrophosphate to an asparagine residue within an Asn-X-Ser/Thr consensus motif in nascent polypeptide chains, the first step in protein N-glycosylation. N-glycosylation occurs cotranslationally and the complex associates with the Sec61 complex at the channel-forming translocon complex that mediates protein translocation across the endoplasmic reticulum (ER). All subunits are required for a maximal enzyme activity. The sequence is that of Dolichyl-diphosphooligosaccharide--protein glycosyltransferase subunit 4 from Drosophila yakuba (Fruit fly).